Consider the following 113-residue polypeptide: Large ribosomal subunit protein eL31 (113 aa).

Belongs to the eukaryotic ribosomal protein eL31 family. In terms of assembly, component of the large ribosomal subunit (LSU). Mature yeast ribosomes consist of a small (40S) and a large (60S) subunit. The 40S small subunit contains 1 molecule of ribosomal RNA (18S rRNA) and at least 33 different proteins. The large 60S subunit contains 3 rRNA molecules (25S, 5.8S and 5S rRNA) and at least 46 different proteins.

It localises to the cytoplasm. In terms of biological role, component of the ribosome, a large ribonucleoprotein complex responsible for the synthesis of proteins in the cell. The small ribosomal subunit (SSU) binds messenger RNAs (mRNAs) and translates the encoded message by selecting cognate aminoacyl-transfer RNA (tRNA) molecules. The large subunit (LSU) contains the ribosomal catalytic site termed the peptidyl transferase center (PTC), which catalyzes the formation of peptide bonds, thereby polymerizing the amino acids delivered by tRNAs into a polypeptide chain. The nascent polypeptides leave the ribosome through a tunnel in the LSU and interact with protein factors that function in enzymatic processing, targeting, and the membrane insertion of nascent chains at the exit of the ribosomal tunnel. This chain is Large ribosomal subunit protein eL31 (rpl31), found in Schizosaccharomyces pombe (strain 972 / ATCC 24843) (Fission yeast).